The chain runs to 403 residues: Ribosomal RNA large subunit methyltransferase I (403 aa).

The region spanning 9-88 is the PUA domain; the sequence is YPRLVLSKGR…ESIDIAFFTR (80 aa).

This sequence belongs to the methyltransferase superfamily. RlmI family.

The protein resides in the cytoplasm. It catalyses the reaction cytidine(1962) in 23S rRNA + S-adenosyl-L-methionine = 5-methylcytidine(1962) in 23S rRNA + S-adenosyl-L-homocysteine + H(+). In terms of biological role, specifically methylates the cytosine at position 1962 (m5C1962) of 23S rRNA. The sequence is that of Ribosomal RNA large subunit methyltransferase I from Salmonella paratyphi A (strain ATCC 9150 / SARB42).